The primary structure comprises 194 residues: dTTP/UTP pyrophosphatase (194 aa).

The active-site Proton acceptor is Asp66.

Belongs to the Maf family. YhdE subfamily. A divalent metal cation serves as cofactor.

Its subcellular location is the cytoplasm. The catalysed reaction is dTTP + H2O = dTMP + diphosphate + H(+). The enzyme catalyses UTP + H2O = UMP + diphosphate + H(+). Nucleoside triphosphate pyrophosphatase that hydrolyzes dTTP and UTP. May have a dual role in cell division arrest and in preventing the incorporation of modified nucleotides into cellular nucleic acids. The protein is dTTP/UTP pyrophosphatase of Anaeromyxobacter dehalogenans (strain 2CP-1 / ATCC BAA-258).